A 569-amino-acid polypeptide reads, in one-letter code: Proline--tRNA ligase (569 aa).

This sequence belongs to the class-II aminoacyl-tRNA synthetase family. ProS type 1 subfamily. Homodimer.

Its subcellular location is the cytoplasm. It catalyses the reaction tRNA(Pro) + L-proline + ATP = L-prolyl-tRNA(Pro) + AMP + diphosphate. Catalyzes the attachment of proline to tRNA(Pro) in a two-step reaction: proline is first activated by ATP to form Pro-AMP and then transferred to the acceptor end of tRNA(Pro). As ProRS can inadvertently accommodate and process non-cognate amino acids such as alanine and cysteine, to avoid such errors it has two additional distinct editing activities against alanine. One activity is designated as 'pretransfer' editing and involves the tRNA(Pro)-independent hydrolysis of activated Ala-AMP. The other activity is designated 'posttransfer' editing and involves deacylation of mischarged Ala-tRNA(Pro). The misacylated Cys-tRNA(Pro) is not edited by ProRS. This Lactiplantibacillus plantarum (strain ATCC BAA-793 / NCIMB 8826 / WCFS1) (Lactobacillus plantarum) protein is Proline--tRNA ligase.